The primary structure comprises 1299 residues: Phosphoribosylformylglycinamidine synthase (1299 aa).

ATP is bound by residues 310-321 (GAATGAGGEIRD), 389-391 (TGY), and alanine 680. 4 residues coordinate Mg(2+): aspartate 681, glutamate 720, asparagine 724, and aspartate 888. Serine 890 contributes to the ATP binding site. A Glutamine amidotransferase type-1 domain is found at 1046 to 1299 (VAVLREQGVN…MFRNARVWLG (254 aa)). Cysteine 1139 functions as the Nucleophile in the catalytic mechanism. Catalysis depends on residues histidine 1264 and glutamate 1266.

It in the N-terminal section; belongs to the FGAMS family. Monomer.

Its subcellular location is the cytoplasm. The catalysed reaction is N(2)-formyl-N(1)-(5-phospho-beta-D-ribosyl)glycinamide + L-glutamine + ATP + H2O = 2-formamido-N(1)-(5-O-phospho-beta-D-ribosyl)acetamidine + L-glutamate + ADP + phosphate + H(+). Its pathway is purine metabolism; IMP biosynthesis via de novo pathway; 5-amino-1-(5-phospho-D-ribosyl)imidazole from N(2)-formyl-N(1)-(5-phospho-D-ribosyl)glycinamide: step 1/2. Functionally, phosphoribosylformylglycinamidine synthase involved in the purines biosynthetic pathway. Catalyzes the ATP-dependent conversion of formylglycinamide ribonucleotide (FGAR) and glutamine to yield formylglycinamidine ribonucleotide (FGAM) and glutamate. The protein is Phosphoribosylformylglycinamidine synthase of Myxococcus xanthus (strain DK1622).